A 177-amino-acid chain; its full sequence is Protein SPMIP1 (177 aa).

The tract at residues 47–80 (SRLPRKLPTLLPQASVAPPPPASKTTPSKAPSPA) is disordered.

This Mus musculus (Mouse) protein is Protein SPMIP1 (Spmip1).